Here is a 293-residue protein sequence, read N- to C-terminus: Small ribosomal subunit biogenesis GTPase RsgA (293 aa).

A CP-type G domain is found at 63–223; sequence KNWLVRPPIA…VADTPGFSAL (161 aa). GTP is bound by residues 112 to 115 and 166 to 174; these read NKMD and GQSGVGKSS. Residues C247, C252, H254, and C260 each contribute to the Zn(2+) site.

This sequence belongs to the TRAFAC class YlqF/YawG GTPase family. RsgA subfamily. Monomer. Associates with 30S ribosomal subunit, binds 16S rRNA. Requires Zn(2+) as cofactor.

It is found in the cytoplasm. Its function is as follows. One of several proteins that assist in the late maturation steps of the functional core of the 30S ribosomal subunit. Helps release RbfA from mature subunits. May play a role in the assembly of ribosomal proteins into the subunit. Circularly permuted GTPase that catalyzes slow GTP hydrolysis, GTPase activity is stimulated by the 30S ribosomal subunit. The chain is Small ribosomal subunit biogenesis GTPase RsgA from Geobacillus sp. (strain WCH70).